Here is a 120-residue protein sequence, read N- to C-terminus: Large ribosomal subunit protein eL34z (120 aa).

Positions V31–I51 are disordered.

It belongs to the eukaryotic ribosomal protein eL34 family.

This chain is Large ribosomal subunit protein eL34z (RPL34A), found in Arabidopsis thaliana (Mouse-ear cress).